We begin with the raw amino-acid sequence, 263 residues long: Type-2Bb cytolytic delta-endotoxin (263 aa).

This sequence belongs to the cyt1/cyt2 endotoxin family. Post-translationally, active after proteolytic processing.

Its function is as follows. Kills the larvae of dipteran insects by making pores in the epithelial cell membrane of the insect midgut. This chain is Type-2Bb cytolytic delta-endotoxin (cyt2Bb1), found in Bacillus thuringiensis subsp. jegathesan.